A 1357-amino-acid polypeptide reads, in one-letter code: DNA-directed RNA polymerase subunit beta (1357 aa).

Belongs to the RNA polymerase beta chain family. In terms of assembly, the RNAP catalytic core consists of 2 alpha, 1 beta, 1 beta' and 1 omega subunit. When a sigma factor is associated with the core the holoenzyme is formed, which can initiate transcription.

The enzyme catalyses RNA(n) + a ribonucleoside 5'-triphosphate = RNA(n+1) + diphosphate. Functionally, DNA-dependent RNA polymerase catalyzes the transcription of DNA into RNA using the four ribonucleoside triphosphates as substrates. The chain is DNA-directed RNA polymerase subunit beta from Pseudomonas aeruginosa (strain ATCC 15692 / DSM 22644 / CIP 104116 / JCM 14847 / LMG 12228 / 1C / PRS 101 / PAO1).